The sequence spans 358 residues: Putative pyruvyl transferase EpsI (358 aa).

It belongs to the polysaccharide pyruvyl transferase family.

In terms of biological role, may be involved in the production of the exopolysaccharide (EPS) component of the extracellular matrix during biofilm formation. EPS is responsible for the adhesion of chains of cells into bundles. This chain is Putative pyruvyl transferase EpsI (epsI), found in Bacillus subtilis (strain 168).